Consider the following 640-residue polypeptide: Probable potassium transport system protein Kup 3 (640 aa).

Over residues 1–15 the composition is skewed to low complexity; that stretch reads MTVDAAATPAEAPAT. A disordered region spans residues 1–20; the sequence is MTVDAAATPAEAPATNGHGD. Transmembrane regions (helical) follow at residues 30-50, 71-91, 117-137, 155-175, 183-203, 224-244, 265-285, 294-314, 363-383, 385-405, 410-430, and 437-457; these read LTLGSIGVVYGDIGTSPLYAL, VISLILWALIVVVTLKYVVIL, ASIIVLLGIISGALFYGDAVI, AAFDPYVVPLTVIILAALFAV, VAAFFGPIMLIWFLVIGIAAF, FMLHHGIVGFITLGAVFLAVT, WLFVVLPSLALNYLGQGALII, PFFLMFPEWALIPMVALATVA, LLLASVVLLVLLFKSSSALAS, YGISVTGTMVVTAMMGFVVIW, WSPLAAGALIAPFLFLDLTFL, and VLEGGWVPLALGGFVMTLMYT.

Belongs to the HAK/KUP transporter (TC 2.A.72) family.

The protein resides in the cell inner membrane. The enzyme catalyses K(+)(in) + H(+)(in) = K(+)(out) + H(+)(out). In terms of biological role, transport of potassium into the cell. Likely operates as a K(+):H(+) symporter. The protein is Probable potassium transport system protein Kup 3 of Bradyrhizobium sp. (strain BTAi1 / ATCC BAA-1182).